Here is a 121-residue protein sequence, read N- to C-terminus: Small ribosomal subunit protein uS11 (121 aa).

Belongs to the universal ribosomal protein uS11 family. Part of the 30S ribosomal subunit. Interacts with proteins S7 and S18. Binds to IF-3.

Located on the platform of the 30S subunit, it bridges several disparate RNA helices of the 16S rRNA. Forms part of the Shine-Dalgarno cleft in the 70S ribosome. The sequence is that of Small ribosomal subunit protein uS11 from Mycoplasma genitalium (strain ATCC 33530 / DSM 19775 / NCTC 10195 / G37) (Mycoplasmoides genitalium).